A 102-amino-acid chain; its full sequence is Small ribosomal subunit protein uS10 (102 aa).

Belongs to the universal ribosomal protein uS10 family. As to quaternary structure, part of the 30S ribosomal subunit.

Its function is as follows. Involved in the binding of tRNA to the ribosomes. The protein is Small ribosomal subunit protein uS10 of Clavibacter michiganensis subsp. michiganensis (strain NCPPB 382).